Consider the following 262-residue polypeptide: Acyl-coenzyme A diphosphatase FITM2 (262 aa).

Residues 1-23 lie on the Cytoplasmic side of the membrane; it reads MEHLERCAWFLRGTLVRATVRRH. A helical membrane pass occupies residues 24–44; that stretch reads LPWALVAAMLAGSVVKELSPL. Topologically, residues 45 to 57 are lumenal; sequence PESYLSNKRNVLN. The helical transmembrane segment at 58-78 threads the bilayer; that stretch reads VYFVKLAWAWTVCLLLPFIAL. Over 79–93 the chain is Cytoplasmic; the sequence is TNYHLTGKTSLVLRR. The chain crosses the membrane as a helical span at residues 94–114; it reads LSTLLVGTAIWYICTALFSNI. Over 115 to 145 the chain is Lumenal; that stretch reads EHYTGSCYQSPALEGIRQEHRSKQQCHREGG. The helical transmembrane segment at 146–166 threads the bilayer; it reads FWHGFDISGHSFLLTFCALMI. His155 is an active-site residue. Residues 167-190 are Cytoplasmic-facing; sequence VEEMAVLHEVKTDRGHHLHAAITT. A helical membrane pass occupies residues 191 to 211; that stretch reads LVVALGFLTFIWVWMFLCTAV. Residues 212-218 lie on the Lumenal side of the membrane; sequence YFHDLTQ. Residue His214 is part of the active site. A helical membrane pass occupies residues 219-239; it reads KVFGTMFGLLGWYGTYGYWYL. At 240–262 the chain is on the cytoplasmic side; the sequence is KSFSPGLPPQSCSLTLKRDTYKK.

Belongs to the FIT family. Widely expressed, with highest levels in white and brown adipose tissues (at protein level). In the heart, mRNA expression levels do not correlate well with protein levels, suggesting post-transcriptional regulation in this organ.

It localises to the endoplasmic reticulum membrane. It carries out the reaction an acyl-CoA + H2O = an acyl-4'-phosphopantetheine + adenosine 3',5'-bisphosphate + 2 H(+). The catalysed reaction is (9Z)-octadecenoyl-CoA + H2O = S-(9Z-octadecenoyl)-4'-phosphopantetheine + adenosine 3',5'-bisphosphate + 2 H(+). It catalyses the reaction (5Z,8Z,11Z,14Z)-eicosatetraenoyl-CoA + H2O = S-(5Z,8Z,11Z,14Z-eicosatetraenoyl)-4'-phosphopantetheine + adenosine 3',5'-bisphosphate + 2 H(+). The enzyme catalyses hexadecanoyl-CoA + H2O = S-hexadecanoyl-4'-phosphopantetheine + adenosine 3',5'-bisphosphate + 2 H(+). Functionally, fatty acyl-coenzyme A (CoA) diphosphatase that hydrolyzes fatty acyl-CoA to yield acyl-4'-phosphopantetheine and adenosine 3',5'-bisphosphate. Preferentially hydrolyzes unsaturated long-chain acyl-CoA substrates such as oleoyl-CoA/(9Z)-octadecenoyl-CoA and arachidonoyl-CoA/(5Z,8Z,11Z,14Z)-eicosatetraenoyl-CoA in the endoplasmic reticulum (ER) lumen. This catalytic activity is required for maintaining ER structure and for lipid droplets (LDs) biogenesis, which are lipid storage organelles involved in maintaining lipid and energy homeostasis. Directly binds to diacylglycerol (DAGs) and triacylglycerol, which is also important for LD biogenesis. May support directional budding of nacent LDs from the ER into the cytosol by reducing DAG levels at sites of LD formation. Plays a role in the regulation of cell morphology and cytoskeletal organization. The polypeptide is Acyl-coenzyme A diphosphatase FITM2 (Mus musculus (Mouse)).